The chain runs to 557 residues: uncharacterized protein (557 aa).

The region spanning 7-206 (SSFIDMLRLG…FACFLEGMLS (200 aa)) is the DhaL domain.

This is an uncharacterized protein from Mycoplasma genitalium (strain ATCC 33530 / DSM 19775 / NCTC 10195 / G37) (Mycoplasmoides genitalium).